The primary structure comprises 368 residues: Agmatine deiminase (368 aa).

Cysteine 357 functions as the Amidino-cysteine intermediate in the catalytic mechanism.

The protein belongs to the agmatine deiminase family. Homodimer.

The catalysed reaction is agmatine + H2O = N-carbamoylputrescine + NH4(+). The protein operates within amine and polyamine biosynthesis; putrescine biosynthesis via agmatine pathway; N-carbamoylputrescine from agmatine: step 1/1. In terms of biological role, mediates the hydrolysis of agmatine into N-carbamoylputrescine in the arginine decarboxylase (ADC) pathway of putrescine biosynthesis, a basic polyamine. The polypeptide is Agmatine deiminase (Pseudomonas fluorescens (strain ATCC BAA-477 / NRRL B-23932 / Pf-5)).